Consider the following 352-residue polypeptide: Holliday junction branch migration complex subunit RuvB (352 aa).

The interval 4–191 (TDKLAAPARV…FGIVARLEFY (188 aa)) is large ATPase domain (RuvB-L). Residues L30, R31, G72, K75, T76, T77, 138-140 (EDY), R181, Y191, and R228 each bind ATP. A Mg(2+)-binding site is contributed by T76. The interval 192–262 (TADELARIVT…MADAALAMLD (71 aa)) is small ATPAse domain (RuvB-S). The head domain (RuvB-H) stretch occupies residues 265 to 352 (SVGFDLMDRK…SGASELFGDA (88 aa)). Positions 301, 320, and 325 each coordinate DNA.

The protein belongs to the RuvB family. As to quaternary structure, homohexamer. Forms an RuvA(8)-RuvB(12)-Holliday junction (HJ) complex. HJ DNA is sandwiched between 2 RuvA tetramers; dsDNA enters through RuvA and exits via RuvB. An RuvB hexamer assembles on each DNA strand where it exits the tetramer. Each RuvB hexamer is contacted by two RuvA subunits (via domain III) on 2 adjacent RuvB subunits; this complex drives branch migration. In the full resolvosome a probable DNA-RuvA(4)-RuvB(12)-RuvC(2) complex forms which resolves the HJ.

The protein resides in the cytoplasm. It catalyses the reaction ATP + H2O = ADP + phosphate + H(+). Functionally, the RuvA-RuvB-RuvC complex processes Holliday junction (HJ) DNA during genetic recombination and DNA repair, while the RuvA-RuvB complex plays an important role in the rescue of blocked DNA replication forks via replication fork reversal (RFR). RuvA specifically binds to HJ cruciform DNA, conferring on it an open structure. The RuvB hexamer acts as an ATP-dependent pump, pulling dsDNA into and through the RuvAB complex. RuvB forms 2 homohexamers on either side of HJ DNA bound by 1 or 2 RuvA tetramers; 4 subunits per hexamer contact DNA at a time. Coordinated motions by a converter formed by DNA-disengaged RuvB subunits stimulates ATP hydrolysis and nucleotide exchange. Immobilization of the converter enables RuvB to convert the ATP-contained energy into a lever motion, pulling 2 nucleotides of DNA out of the RuvA tetramer per ATP hydrolyzed, thus driving DNA branch migration. The RuvB motors rotate together with the DNA substrate, which together with the progressing nucleotide cycle form the mechanistic basis for DNA recombination by continuous HJ branch migration. Branch migration allows RuvC to scan DNA until it finds its consensus sequence, where it cleaves and resolves cruciform DNA. The protein is Holliday junction branch migration complex subunit RuvB of Cupriavidus necator (strain ATCC 17699 / DSM 428 / KCTC 22496 / NCIMB 10442 / H16 / Stanier 337) (Ralstonia eutropha).